Consider the following 787-residue polypeptide: Exocyst complex component SEC15B (787 aa).

Belongs to the SEC15 family. The exocyst complex is composed of SEC3, SEC5, SEC6, SEC8, SEC10, EXO70A1 and EXO84B. Interacts with EXO84B. Binds to EXO70H1 AND EXO70B2. Binds directly to B1L.

It is found in the cytoplasm. Its subcellular location is the cytosol. The protein localises to the cytoskeleton. The protein resides in the phragmoplast. It localises to the secreted. It is found in the cell wall. Its subcellular location is the extracellular exosome. Functionally, component of the exocyst complex involved in the docking of exocytic vesicles with fusion sites on the plasma membrane during regulated or polarized secretion. Involved in polarized cell growth and organ morphogenesis. During cytokinesis, involved in cell plate initiation, cell plate maturation and formation of new primary cell wall. The sequence is that of Exocyst complex component SEC15B from Arabidopsis thaliana (Mouse-ear cress).